The sequence spans 499 residues: Glutamate--tRNA ligase (499 aa).

Positions 12 to 22 (PSPTGHLHIGN) match the 'HIGH' region motif. The 'KMSKS' region motif lies at 259–263 (KLSKR). K262 provides a ligand contact to ATP.

Belongs to the class-I aminoacyl-tRNA synthetase family. Glutamate--tRNA ligase type 1 subfamily. Monomer.

It is found in the cytoplasm. The enzyme catalyses tRNA(Glu) + L-glutamate + ATP = L-glutamyl-tRNA(Glu) + AMP + diphosphate. Its function is as follows. Catalyzes the attachment of glutamate to tRNA(Glu) in a two-step reaction: glutamate is first activated by ATP to form Glu-AMP and then transferred to the acceptor end of tRNA(Glu). The sequence is that of Glutamate--tRNA ligase from Lactobacillus acidophilus (strain ATCC 700396 / NCK56 / N2 / NCFM).